A 216-amino-acid polypeptide reads, in one-letter code: Hydrogenase-4 component E (216 aa).

The Periplasmic segment spans residues 1-3; it reads MTG. The helical transmembrane segment at 4–24 threads the bilayer; the sequence is SMIVNNLAGLMMLTSLFVISV. Residues 25–38 lie on the Cytoplasmic side of the membrane; the sequence is KSYRLSCGFYACQS. 2 helical membrane passes run 39–59 and 60–80; these read LVLV…QLLI and WSAS…TYAA. Residues 81–92 are Cytoplasmic-facing; the sequence is RNIPQNIPEKAL. The helical transmembrane segment at 93–113 threads the bilayer; sequence FGPAMMALLAALIVLLCAFVV. The Periplasmic portion of the chain corresponds to 114–122; it reads QPVKLPMAT. The chain crosses the membrane as a helical span at residues 123–143; it reads GLKPALAVALGHFLLGLLCIV. The Cytoplasmic segment spans residues 144-150; it reads SQRNILR. The chain crosses the membrane as a helical span at residues 151–171; it reads QIFGYCLMENGSHLVLALLAW. Topologically, residues 172–175 are periplasmic; that stretch reads RAPE. Residues 176–196 form a helical membrane-spanning segment; it reads LVEIGIATDAIFAVIVMVLLA. At 197-216 the chain is on the cytoplasmic side; that stretch reads RKIWRTHGTLDVNNLTALKG.

It is found in the cell inner membrane. The sequence is that of Hydrogenase-4 component E (hyfE) from Escherichia coli O157:H7.